The sequence spans 469 residues: 3-isopropylmalate dehydratase large subunit (469 aa).

The [4Fe-4S] cluster site is built by Cys-350, Cys-410, and Cys-413.

It belongs to the aconitase/IPM isomerase family. LeuC type 1 subfamily. Heterodimer of LeuC and LeuD. Requires [4Fe-4S] cluster as cofactor.

The catalysed reaction is (2R,3S)-3-isopropylmalate = (2S)-2-isopropylmalate. It participates in amino-acid biosynthesis; L-leucine biosynthesis; L-leucine from 3-methyl-2-oxobutanoate: step 2/4. Its function is as follows. Catalyzes the isomerization between 2-isopropylmalate and 3-isopropylmalate, via the formation of 2-isopropylmaleate. This Rhizobium rhizogenes (strain K84 / ATCC BAA-868) (Agrobacterium radiobacter) protein is 3-isopropylmalate dehydratase large subunit.